The following is a 476-amino-acid chain: Cytosolic iron-sulfur assembly component 3 (476 aa).

Alanine 2 carries the post-translational modification N-acetylalanine. [4Fe-4S] cluster contacts are provided by cysteine 24, cysteine 71, cysteine 74, cysteine 77, cysteine 190, cysteine 246, cysteine 395, and cysteine 399.

Belongs to the NARF family. In terms of assembly, external component of the CIA complex. In the CIA complex, interacts directly with CIAO1 and MMS19.

Its function is as follows. Component of the cytosolic iron-sulfur protein assembly (CIA) complex, a multiprotein complex that mediates the incorporation of iron-sulfur cluster into extramitochondrial Fe/S proteins. Seems to negatively regulate the level of HIF1A expression, although this effect could be indirect. This Pongo abelii (Sumatran orangutan) protein is Cytosolic iron-sulfur assembly component 3.